Consider the following 118-residue polypeptide: Ig heavy chain V region X24 (118 aa).

The Ig-like domain occupies 1-111 (EVKLLESGGG…GYFDYWGQGT (111 aa)).

This chain is Ig heavy chain V region X24, found in Mus musculus (Mouse).